The primary structure comprises 243 residues: Small ribosomal subunit protein uS3 (243 aa).

The KH type-2 domain occupies 39–107; sequence MRKFVMSELK…ETHLNIVEVR (69 aa). A disordered region spans residues 214 to 243; the sequence is ASERRAMEGDAQGPASRDRDRDRDRRRDNA. Positions 229 to 243 are enriched in basic and acidic residues; sequence SRDRDRDRDRRRDNA.

It belongs to the universal ribosomal protein uS3 family. As to quaternary structure, part of the 30S ribosomal subunit. Forms a tight complex with proteins S10 and S14.

Functionally, binds the lower part of the 30S subunit head. Binds mRNA in the 70S ribosome, positioning it for translation. In Rhizobium leguminosarum bv. trifolii (strain WSM2304), this protein is Small ribosomal subunit protein uS3.